A 287-amino-acid polypeptide reads, in one-letter code: Type 1 encapsulin shell protein EncA (287 aa).

This sequence belongs to the encapsulin family. Family 1 subfamily. As to quaternary structure, the 32 nm encapsulin nanocompartment is formed by 180 subunits; monomers form pentamers which assemble to form shells. There are 36 pores where the pentamers meet as well as 3-fold axis channels and dimer channels. The N-terminus of the protein is inside the shell.

The protein localises to the encapsulin nanocompartment. Shell component of a type 1, iron-storage encapsulin nanocompartment. Encapsulin nanocompartments are 32 nm in diameter with an iron- and phosphorus-rich core (4Fe:1P) about 24 nm in diameter. Upon expression in E.coli most particles are 32 nm, 20% are 18 nm. The core is filled with an average of 14 dense granules, 5-6 nm in diameter that are not evenly distributed. Each nanocompartment is estimated to hold 30,000-35,000 Fe atoms. The minor proteins EncB, EncC and EncD probably lie against the interior face of the nanocompartment. The chain is Type 1 encapsulin shell protein EncA from Myxococcus xanthus (strain DK1622).